Here is a 212-residue protein sequence, read N- to C-terminus: MRIGILGGTFDPIHYGHIRPAMEVKASLKLDNILLMPNHIPPHKNTTHSSTAQRLEMVAQVCEALTGFELCDIEAKRNSPSYTVVTLKQLSRLYPDDELFFIMGMDSFIHLQSWHKWQQLFELANIVVCQRPGWHLAEGHPMQHELSARHATLEALSHSSAPQHGRIFTVDISPQDISSTQIRSQLAMGEIPQDALLPVTLNYIQKQRLYFS.

Belongs to the NadD family.

The catalysed reaction is nicotinate beta-D-ribonucleotide + ATP + H(+) = deamido-NAD(+) + diphosphate. It participates in cofactor biosynthesis; NAD(+) biosynthesis; deamido-NAD(+) from nicotinate D-ribonucleotide: step 1/1. Catalyzes the reversible adenylation of nicotinate mononucleotide (NaMN) to nicotinic acid adenine dinucleotide (NaAD). In Shewanella sp. (strain MR-4), this protein is Probable nicotinate-nucleotide adenylyltransferase.